Reading from the N-terminus, the 268-residue chain is Proenkephalin-A (268 aa).

The signal sequence occupies residues 1-24 (MARLLRLCTWLVALGPGLLATVQA). Intrachain disulfides connect C26–C48, C30–C52, and C33–C65. Residues 163–184 (TGDDRDRENHHQEGGDSDEGVS) form a disordered region. The span at 164–176 (GDDRDRENHHQEG) shows a compositional bias: basic and acidic residues. Propeptides lie at residues 197–208 (SPQVEDEAKELQ) and 218–228 (VGRPEWWMDYQ). S252 is subject to Phosphoserine.

This sequence belongs to the opioid neuropeptide precursor family. Post-translationally, proenkephalin-A is cleaved by CTSL to generate Met-enkephalin. In terms of processing, processed and degraded by ACE. Probably cleaved by ACE. Post-translationally, processed by ACE to generate Met-enkephalin in the nucleus accumbens of the brain. In terms of processing, the N-terminal domain contains 6 conserved cysteines thought to be involved in disulfide bonding and/or processing.

It is found in the cytoplasmic vesicle. It localises to the secretory vesicle. The protein localises to the chromaffin granule lumen. Its subcellular location is the secreted. Functionally, neuropeptide that competes with and mimic the effects of opiate drugs. They play a role in a number of physiologic functions, including pain perception and responses to stress. Its function is as follows. Met-enkephalin-Arg-Phe neuropeptide acts as a strong ligand of Mu-type opioid receptor OPRM1. Met-enkephalin-Arg-Phe-binding to OPRM1 in the nucleus accumbens of the brain increases activation of OPRM1, leading to long-term synaptic depression of glutamate release. In terms of biological role, increases glutamate release in the striatum and decreases GABA concentration in the striatum. Increases glutamate release in the striatum. This is Proenkephalin-A (PENK) from Cavia porcellus (Guinea pig).